Reading from the N-terminus, the 342-residue chain is Protein-glutamate methylesterase/protein-glutamine glutaminase 2 (342 aa).

Positions 2–119 (NIGIVNDLPL…GGSADPSQPL (118 aa)) constitute a Response regulatory domain. Aspartate 53 is modified (4-aspartylphosphate). The CheB-type methylesterase domain maps to 144-337 (PAPQGALPPL…DQLISLVQRN (194 aa)). Active-site residues include serine 159, histidine 186, and aspartate 279.

This sequence belongs to the CheB family. Phosphorylated by CheA. Phosphorylation of the N-terminal regulatory domain activates the methylesterase activity.

It is found in the cytoplasm. It carries out the reaction [protein]-L-glutamate 5-O-methyl ester + H2O = L-glutamyl-[protein] + methanol + H(+). The enzyme catalyses L-glutaminyl-[protein] + H2O = L-glutamyl-[protein] + NH4(+). In terms of biological role, involved in chemotaxis. Part of a chemotaxis signal transduction system that modulates chemotaxis in response to various stimuli. Catalyzes the demethylation of specific methylglutamate residues introduced into the chemoreceptors (methyl-accepting chemotaxis proteins or MCP) by CheR. Also mediates the irreversible deamidation of specific glutamine residues to glutamic acid. The chain is Protein-glutamate methylesterase/protein-glutamine glutaminase 2 from Burkholderia mallei (strain ATCC 23344).